The primary structure comprises 50 residues: Large ribosomal subunit protein bL33 (50 aa).

It belongs to the bacterial ribosomal protein bL33 family.

This is Large ribosomal subunit protein bL33 from Solibacter usitatus (strain Ellin6076).